The chain runs to 120 residues: U-scoloptoxin(16)-Er2a (120 aa).

The N-terminal stretch at 1–26 is a signal peptide; it reads MNTVSVVQFLAVGCAVFVLYGRGVFA.

This sequence belongs to the scoloptoxin-16 family. Contains 4 disulfide bonds. Expressed by the venom gland.

It localises to the secreted. This Ethmostigmus rubripes (Giant centipede) protein is U-scoloptoxin(16)-Er2a.